Here is a 488-residue protein sequence, read N- to C-terminus: Envelope glycoprotein gp62 (488 aa).

A signal peptide spans 1-20 (MGKFLATLILFFQFCPLILS). Over 21 to 442 (DYSPSCCTLT…LGLSQWAREA (422 aa)) the chain is Extracellular. N-linked (GlcNAc...) asparagine; by host glycans are attached at residues Asn-140 and Asn-222. The short motif at 225 to 228 (CIVC) is the CXXC element. Cystine bridges form between Cys-225-Cys-228, Cys-225-Cys-401, and Cys-393-Cys-400. N-linked (GlcNAc...) asparagine; by host glycans are attached at residues Asn-244 and Asn-272. The fusion peptide stretch occupies residues 313 to 333 (AVPVAVWLVSALAMGAGMAGG). 2 coiled-coil regions span residues 341–387 (ASGR…LLFW) and 397–429 (QEQC…GWGL). The tract at residues 376–392 (AQNRRGLDLLFWEQGGL) is immunosuppression. The short motif at 393–401 (CKALQEQCC) is the CX6CC element. The N-linked (GlcNAc...) asparagine; by host glycan is linked to Asn-404. A helical membrane pass occupies residues 443 to 463 (LQTGITLVALLLLVILAGPCI). Residue Cys-462 is the site of S-palmitoyl cysteine; by host attachment. Over 464-488 (LRQLRHLPSRVRYPHYSLINPESSL) the chain is Cytoplasmic.

In terms of assembly, the mature envelope protein (Env) consists of a trimer of SU-TM heterodimers attached by a labile interchain disulfide bond. In terms of processing, specific enzymatic cleavages in vivo yield mature proteins. Envelope glycoproteins are synthesized as an inactive precursor that is N-glycosylated and processed likely by host cell furin or by a furin-like protease in the Golgi to yield the mature SU and TM proteins. The cleavage site between SU and TM requires the minimal sequence [KR]-X-[KR]-R. The CXXC motif is highly conserved across a broad range of retroviral envelope proteins. It is thought to participate in the formation of a labile disulfide bond possibly with the CX6CC motif present in the transmembrane protein. Isomerization of the intersubunit disulfide bond to an SU intrachain disulfide bond is thought to occur upon receptor recognition in order to allow membrane fusion. Post-translationally, the transmembrane protein is palmitoylated.

The protein localises to the virion membrane. The protein resides in the host cell membrane. Its function is as follows. The surface protein (SU) attaches the virus to the host cell by binding to its receptor. This interaction triggers the refolding of the transmembrane protein (TM) and is thought to activate its fusogenic potential by unmasking its fusion peptide. Fusion occurs at the host cell plasma membrane. Functionally, the transmembrane protein (TM) acts as a class I viral fusion protein. Under the current model, the protein has at least 3 conformational states: pre-fusion native state, pre-hairpin intermediate state, and post-fusion hairpin state. During viral and target cell membrane fusion, the coiled coil regions (heptad repeats) assume a trimer-of-hairpins structure, positioning the fusion peptide in close proximity to the C-terminal region of the ectodomain. The formation of this structure appears to drive apposition and subsequent fusion of viral and target cell membranes. Membranes fusion leads to delivery of the nucleocapsid into the cytoplasm. The polypeptide is Envelope glycoprotein gp62 (env) (Human T-cell leukemia virus 1 (isolate Zaire EL subtype B) (HTLV-1)).